Here is a 1890-residue protein sequence, read N- to C-terminus: Callose synthase 9 (1890 aa).

Residues 1-489 (MSRAESSWER…EHRTFLHLYH (489 aa)) lie on the Cytoplasmic side of the membrane. Residues 490–510 (SFHRLWIFLAMMFQALAIIAF) traverse the membrane as a helical segment. Residues 511 to 523 (NKDDLTSRKTLLQ) are Extracellular-facing. A helical transmembrane segment spans residues 524-544 (ILSLGPTFVVMKFSESVLEVI). The Cytoplasmic segment spans residues 545 to 560 (MMYGAYSTTRRLAVSR). A helical transmembrane segment spans residues 561–581 (IFLRFIWFGLASVFISFLYVK). Residues 582–591 (SLKAPNSDSP) are Extracellular-facing. A helical membrane pass occupies residues 592–612 (IVQLYLIVIAIYGGVQFFFSI). At 613 to 658 (LMRIPTCHNIANKCDRWPVIRFFKWMRQERHYVGRGMYERTSDFIK) the chain is on the cytoplasmic side. A helical membrane pass occupies residues 659-679 (YLLFWLVVLSAKFSFAYFLQI). The Extracellular portion of the chain corresponds to 680-722 (KPLVGPTRMIVKQNNIPYSWHDFVSRKNYNALTVASLWAPVVA). The chain crosses the membrane as a helical span at residues 723–743 (IYLLDIHIFYTIFSAFLGFLL). Topologically, residues 744 to 1457 (GARDRLGEIR…QLLDFFRMMS (714 aa)) are cytoplasmic. A helical membrane pass occupies residues 1458–1478 (FFFTTVGFYLCTMLTVLTVYI). The Extracellular portion of the chain corresponds to 1479–1512 (FLYGRAYLALSGVGATIRERAILLDDTALSAALN). The chain crosses the membrane as a helical span at residues 1513 to 1533 (AQFLFQIGVFTAVPMVLGFIL). The Cytoplasmic portion of the chain corresponds to 1534 to 1539 (EQGFLQ). A helical transmembrane segment spans residues 1540-1560 (AIVSFITMQFQLCTVFFTFSL). Over 1561–1609 (GTRTHYFGRTILHGGARYQATGRGFVVKHIKFSENYRLYSRSHFVKAME) the chain is Extracellular. Helical transmembrane passes span 1610–1630 (VILL…AVSY) and 1631–1651 (ILLT…PYLF). The Extracellular segment spans residues 1652–1703 (NPAGFEWQKVVEDFKEWTNWLFYRGGIGVKGAESWEAWWEEELSHIRTLSGR). A helical transmembrane segment spans residues 1704–1724 (IMETILSLRFFIFQYGIVYKL). Topologically, residues 1725-1732 (KLQGSDTS) are cytoplasmic. The chain crosses the membrane as a helical span at residues 1733 to 1753 (FAVYGWSWVAFAMIIVLFKVF). Over 1754–1768 (TFSQKISVNFQLLLR) the chain is Extracellular. The chain crosses the membrane as a helical span at residues 1769 to 1789 (FIQGLSLLMALAGIIVAVVLT). Over 1790 to 1795 (PLSVTD) the chain is Cytoplasmic. Residues 1796–1816 (IFACVLAFIPTGWGILSIACA) traverse the membrane as a helical segment. The Extracellular portion of the chain corresponds to 1817–1838 (WKPVLKRMGMWKSIRSLARLYD). A helical membrane pass occupies residues 1839-1859 (ALMGMLIFLPVALCSWFPFVS). The Cytoplasmic portion of the chain corresponds to 1860–1890 (TFQTRMMFNQAFSRGLEISLILAGDNPNSGL).

It belongs to the glycosyltransferase 48 family.

It is found in the cell membrane. The enzyme catalyses [(1-&gt;3)-beta-D-glucosyl](n) + UDP-alpha-D-glucose = [(1-&gt;3)-beta-D-glucosyl](n+1) + UDP + H(+). Functionally, involved in sporophytic and gametophytic development. Required for normal plant development. During pollen formation, required for the entry of microspores into mitosis and microspore symmetric division. May be required for correct temporal and spatial control of callose deposition during pollen mitosis. During plant growth and development, callose is found as a transitory component of the cell plate in dividing cells, is a major component of pollen mother cell walls and pollen tubes, and is found as a structural component of plasmodesmatal canals. In Arabidopsis thaliana (Mouse-ear cress), this protein is Callose synthase 9 (CALS9).